We begin with the raw amino-acid sequence, 295 residues long: MNKMEYLSIFGFVSVLYLIIRVDARAYEVNGIDQSKVGFDDNYVVTWGQNNVLKLNQGKEVQLSLDHSSGSGFESKNHYESGFFQIRIKVPPKDTSGVVTAFYLTSKGNTHDEVDFEFLGNKEGKLAVQTNVFTNGKGNREQKLALWFDPSKDFHTYAILWNPYQIVLYVDNIPVRVFKNTTSQGMNYPSKPMQVVVSLWNGENWATDGGKSKINWSLAPFKANFQGFNNSGCFTNAEKNACGSSAYWWNTGSYSKLSDSEQKAYTNVRQKYMNYDYCSDKVRFHVPPSECKWNN.

Positions 1–24 (MNKMEYLSIFGFVSVLYLIIRVDA) are cleaved as a signal peptide. The GH16 domain maps to 27–225 (YEVNGIDQSK…WSLAPFKANF (199 aa)). E113 (nucleophile) is an active-site residue. The active-site Proton donor is E117. Residues E117, 129–131 (QTN), and 139–141 (NRE) each bind xyloglucan. N180 is a glycosylation site (N-linked (GlcNAc...) asparagine). Xyloglucan is bound by residues 204–205 (NW) and G209. 2 N-linked (GlcNAc...) asparagine glycosylation sites follow: N215 and N229. 2 disulfides stabilise this stretch: C233-C242 and C278-C291. R283 provides a ligand contact to xyloglucan.

This sequence belongs to the glycosyl hydrolase 16 family. XTH group 1 subfamily. Post-translationally, contains at least one intrachain disulfide bond essential for its enzymatic activity.

It localises to the secreted. The protein localises to the cell wall. It is found in the extracellular space. Its subcellular location is the apoplast. The catalysed reaction is breaks a beta-(1-&gt;4) bond in the backbone of a xyloglucan and transfers the xyloglucanyl segment on to O-4 of the non-reducing terminal glucose residue of an acceptor, which can be a xyloglucan or an oligosaccharide of xyloglucan.. Functionally, may catalyze xyloglucan endohydrolysis (XEH) and/or endotransglycosylation (XET). Cleaves and religates xyloglucan polymers, an essential constituent of the primary cell wall, and thereby participates in cell wall construction of growing tissues. The polypeptide is Putative xyloglucan endotransglucosylase/hydrolase protein 1 (XTH1) (Arabidopsis thaliana (Mouse-ear cress)).